A 550-amino-acid polypeptide reads, in one-letter code: Major fimbrium tip subunit FimE (550 aa).

Residues 1–21 form the signal peptide; that stretch reads MKSKSIIAQLLYVLIAFMAVS. The N-palmitoyl cysteine moiety is linked to residue Cys22. Cys22 carries S-diacylglycerol cysteine lipidation. Positions 22-51 are excised as a propeptide; sequence CVADKSEPCPSGEPTRVSGSIVSLEHHGLR.

Belongs to the FimE family. In terms of assembly, fimbriae are composed of a major, structural subunit and the minor components FimC, FimD and FimE. Identified in a complex composed of FimC, FimD and FimE (in vitro). Does not directly interact with host proteins, but only as a complex with FimC and FimD.

Its subcellular location is the fimbrium. It is found in the cell outer membrane. In terms of biological role, probably a component of the fimbrium tip; required for incorporation of FimC and FimD into fimbriae. These long, filamentous pili are attached to the cell surface; they mediate biofilm formation, adhesion onto host cells and onto other bacteria that are part of the oral microbiome. They play an important role in invasion of periodontal tissues and are major virulence factors. FimC, FimD and FimE contribute to interaction with host CXCR4 and thereby down-regulate the TLR2-mediated host immune response. In Porphyromonas gingivalis (strain ATCC 33277 / DSM 20709 / CIP 103683 / JCM 12257 / NCTC 11834 / 2561), this protein is Major fimbrium tip subunit FimE.